Reading from the N-terminus, the 245-residue chain is Transmembrane protein 69 (245 aa).

A run of 5 helical transmembrane segments spans residues 97 to 117 (ALYITLAGLIPFTAPPLLMVI), 122 to 142 (IPVLAFTQMAYGAGFLAFLGG), 159 to 179 (YINLASSMSPILFSWAAILFS), 185 to 205 (AIVTLIIGLGIALHNELFLLP), and 216 to 236 (IVSTLVAFISFVVTLILENIY).

The protein localises to the membrane. This is Transmembrane protein 69 (Tmem69) from Mus musculus (Mouse).